A 287-amino-acid chain; its full sequence is Putative glutamate--cysteine ligase regulatory subunit (287 aa).

The protein belongs to the aldo/keto reductase family. Glutamate--cysteine ligase light chain subfamily. In terms of assembly, heterodimer of a catalytic heavy chain and a regulatory light chain.

The protein resides in the cytoplasm. The protein operates within sulfur metabolism; glutathione biosynthesis; glutathione from L-cysteine and L-glutamate: step 1/2. The chain is Putative glutamate--cysteine ligase regulatory subunit from Schizosaccharomyces pombe (strain 972 / ATCC 24843) (Fission yeast).